The chain runs to 144 residues: Pleckstrin homology-like domain family A member 2 (144 aa).

Positions 18 to 111 (ILCEGELEKR…AAITMALIDF (94 aa)) constitute a PH domain. Serine 140 bears the Phosphoserine mark.

This sequence belongs to the PHLDA2 family. As to expression, specifically expressed at high levels in extraembryonic tissues in the developing conceptus (at protein level). Expressed in placenta and yolc sac. Expressed at low levels in fetal liver and kidney.

The protein resides in the cytoplasm. The protein localises to the membrane. Its function is as follows. Plays a role in regulating placenta growth. May act via its PH domain that competes with other PH domain-containing proteins, thereby preventing their binding to membrane lipids. In Mus musculus (Mouse), this protein is Pleckstrin homology-like domain family A member 2 (Phlda2).